The primary structure comprises 130 residues: MIGEWNNGTGRRKSSVARVFIKKGTGKITVNDKDIQAFFGRQTSIMICRQPLFLTNHVETFDIMINVHGGGESGQAGAVRHGITRALIDYDATLKPALSQAGFVTRDAREVERKKVGFRSARRRKQFSKR.

This sequence belongs to the universal ribosomal protein uS9 family.

In Polaromonas naphthalenivorans (strain CJ2), this protein is Small ribosomal subunit protein uS9.